We begin with the raw amino-acid sequence, 846 residues long: Spindle pole body component SPC98 (846 aa).

Phosphoserine occurs at positions 124 and 136.

It belongs to the TUBGCP family. Interacts with TUB4, SPC72 and SPC97.

The protein resides in the nucleus. It localises to the cytoplasm. The protein localises to the cytoskeleton. Its subcellular location is the microtubule organizing center. It is found in the spindle pole body. Its function is as follows. Involved in microtubule organization by the microtubule organizing center, the spindle pole body (SPB). Probably part of the microtubule attachment site at the SPB. The protein is Spindle pole body component SPC98 (SPC98) of Saccharomyces cerevisiae (strain ATCC 204508 / S288c) (Baker's yeast).